Reading from the N-terminus, the 835-residue chain is Protein translocase subunit SecA (835 aa).

Residues Gln-85, 103-107 (GEGKT), and Asp-492 each bind ATP. The Zn(2+) site is built by Cys-819, Cys-821, Cys-830, and Cys-831.

It belongs to the SecA family. In terms of assembly, monomer and homodimer. Part of the essential Sec protein translocation apparatus which comprises SecA, SecYEG and auxiliary proteins SecDF. Other proteins may also be involved. The cofactor is Zn(2+).

The protein resides in the cell membrane. The protein localises to the cytoplasm. It catalyses the reaction ATP + H2O + cellular proteinSide 1 = ADP + phosphate + cellular proteinSide 2.. Its function is as follows. Part of the Sec protein translocase complex. Interacts with the SecYEG preprotein conducting channel. Has a central role in coupling the hydrolysis of ATP to the transfer of proteins into and across the cell membrane, serving as an ATP-driven molecular motor driving the stepwise translocation of polypeptide chains across the membrane. This Clostridium botulinum (strain Loch Maree / Type A3) protein is Protein translocase subunit SecA.